Consider the following 417-residue polypeptide: Histidine biosynthesis bifunctional protein his7 (417 aa).

The segment at Gly-225–Gln-299 is phosphoribosyl-AMP cyclohydrolase. Residues Leu-303–Arg-387 are phosphoribosyl-ATP pyrophosphohydrolase.

Its subcellular location is the cytoplasm. The enzyme catalyses 1-(5-phospho-beta-D-ribosyl)-5'-AMP + H2O = 1-(5-phospho-beta-D-ribosyl)-5-[(5-phospho-beta-D-ribosylamino)methylideneamino]imidazole-4-carboxamide. It catalyses the reaction 1-(5-phospho-beta-D-ribosyl)-ATP + H2O = 1-(5-phospho-beta-D-ribosyl)-5'-AMP + diphosphate + H(+). It functions in the pathway amino-acid biosynthesis; L-histidine biosynthesis; L-histidine from 5-phospho-alpha-D-ribose 1-diphosphate: step 2/9. It participates in amino-acid biosynthesis; L-histidine biosynthesis; L-histidine from 5-phospho-alpha-D-ribose 1-diphosphate: step 3/9. In Schizosaccharomyces pombe (strain 972 / ATCC 24843) (Fission yeast), this protein is Histidine biosynthesis bifunctional protein his7.